The chain runs to 65 residues: Small ribosomal subunit protein bS21 (65 aa).

Belongs to the bacterial ribosomal protein bS21 family.

This Chlorobium limicola (strain DSM 245 / NBRC 103803 / 6330) protein is Small ribosomal subunit protein bS21.